Reading from the N-terminus, the 738-residue chain is MFDKIELSVSPYDTAWVAMIPSLNSVQAPFFPECTKWIVDNQLSDGSWGLPHHHPLLIKDTLSSTLACVLALKKWGVGETLVNKGLQFIELNSTSLNDEKQHTPIGFDIIFPAMLEHAKELALNLPLKSDVIDAMLHRRDVDLKSGSGGSNTEGRKAYLAYIAEGIGKFQDWEMVMKYQRKNGSLFNSPSTTAAAFSHLRNADCLQYLQSVLQKYGNAVPTIYPLDVYSRLLMVDILERLGIDRHFRKEIKLVLEETYRYWLQGNEEIFLDCITCAMAFRILRVNGYDVSSDVFTQFTEDHFFDSLGGYLKDTRTVLELYRASQILYPDEPLLEKQNSWTNHFLEKCLSSGSSYADGPRECITEVVHNALNCPYYADLERLTNRRSIENYNVDETRILKASYRCLNTGNQHFLKLAVEDFNLCQLIHQEELQQLGRWVVEKRLNKLKFARQKLGYCYFSAAATLFAPELSDARLSWAKNGVLTTVVDDFFDVGGSVEELINLIQLIEKWDVDESTHFCSEQVEIIFSALRSTISEIGDKAFTWQGRKVTSHVIKIWLDLLKSMLTETLWTKSKSIPTLDEYMINGYVSFALGPIVLPALFLVGPKLTEEDVRDPELHDLFKAMGTCGRLLNDWRGFQRESKEGKLNAVSLHMIQGNGGVNEEEAIRKIKGLINSQRSELLRLVLREKNSNIPRACKDLFWKMIKVLHLFYLKDDGFTSNEMISTANAVITEPVAFHGP.

Residues Asp487, Asp491, Asn631, Asp632, and Glu639 each contribute to the Mg(2+) site. The short motif at 487–491 is the DDXXD motif element; sequence DDFFD.

It belongs to the terpene synthase family. It depends on Mg(2+) as a cofactor.

It carries out the reaction ent-copalyl diphosphate = ent-kaur-16-ene + diphosphate. It functions in the pathway secondary metabolite biosynthesis; terpenoid biosynthesis. Functionally, diterpene cyclase involved in the biosynthesis of labdane-related diterpenoids (LRDs) natural products. Catalyzes the cyclization of ent-CDP into ent-kaurene. The polypeptide is Ent-kaurene synthase-like 1 (Ricinus communis (Castor bean)).